The sequence spans 415 residues: MKLLELFIASSKPVVETLLITSVGFYLALDTVNLLGHDARKHLNNIVFYVFSPSLIGSRLADSVTYESLVKMWFMPVNVLLTFMIGSLLGWIVIVITKPPSQLRGLIISCCASGNLGTMPLIIIPAICKEKGGPFGDSESCEKYGMGYVTLSMTAFFISVYKHDTNWYVSGGNGLLMDLYINLMRVLSNSPVETHTHSIESNYDDSCKVQLISSKEEEKEEDNHQVGRWEEVKQRVVSLSKKVNLGSIFAPATIAAIIALVIGLITPLRNLIIGTVAPFRVIQDSLTLLGDGAIPAMTLILGGNLLKGMRRSEVRSSEMKNSCIIGVLVARYILLPVSGVLLVRGAYKLDLVTSEPLYQFVLLLQYAVPPAMNLGTKTQLFGAGESECSVIMLWTYSLAAVSLTVWPTFFMWLVT.

The Lumenal segment spans residues 1 to 13; the sequence is MKLLELFIASSKP. Residues 14 to 34 form a helical membrane-spanning segment; sequence VVETLLITSVGFYLALDTVNL. At 35–44 the chain is on the cytoplasmic side; sequence LGHDARKHLN. The helical transmembrane segment at 45–61 threads the bilayer; that stretch reads NIVFYVFSPSLIGSRLA. The Lumenal portion of the chain corresponds to 62–75; sequence DSVTYESLVKMWFM. A helical transmembrane segment spans residues 76–96; the sequence is PVNVLLTFMIGSLLGWIVIVI. At 97-106 the chain is on the cytoplasmic side; it reads TKPPSQLRGL. Residues 107 to 127 traverse the membrane as a helical segment; that stretch reads IISCCASGNLGTMPLIIIPAI. Residues 128 to 143 are Lumenal-facing; that stretch reads CKEKGGPFGDSESCEK. The helical transmembrane segment at 144 to 161 threads the bilayer; it reads YGMGYVTLSMTAFFISVY. Over 162 to 244 the chain is Cytoplasmic; the sequence is KHDTNWYVSG…RVVSLSKKVN (83 aa). A helical transmembrane segment spans residues 245–265; the sequence is LGSIFAPATIAAIIALVIGLI. At 266–285 the chain is on the lumenal side; the sequence is TPLRNLIIGTVAPFRVIQDS. Residues 286 to 306 traverse the membrane as a helical segment; it reads LTLLGDGAIPAMTLILGGNLL. The Cytoplasmic portion of the chain corresponds to 307-322; that stretch reads KGMRRSEVRSSEMKNS. The chain crosses the membrane as a helical span at residues 323–343; the sequence is CIIGVLVARYILLPVSGVLLV. Over 344–355 the chain is Lumenal; it reads RGAYKLDLVTSE. Residues 356–376 traverse the membrane as a helical segment; the sequence is PLYQFVLLLQYAVPPAMNLGT. Residues 377–389 lie on the Cytoplasmic side of the membrane; sequence KTQLFGAGESECS. The chain crosses the membrane as a helical span at residues 390 to 410; sequence VIMLWTYSLAAVSLTVWPTFF. At 411–415 the chain is on the lumenal side; it reads MWLVT.

This sequence belongs to the auxin efflux carrier (TC 2.A.69.2) family. In terms of tissue distribution, expressed in seedlings, rosette and cauline leaves, stems, flowers and siliques.

The protein localises to the endoplasmic reticulum membrane. In terms of biological role, involved in cellular auxin homeostasis by regulating auxin metabolism. Regulates intracellular auxin accumulation at the endoplasmic reticulum and thus auxin availability for nuclear auxin signaling. The polypeptide is Protein PIN-LIKES 4 (Arabidopsis thaliana (Mouse-ear cress)).